Consider the following 513-residue polypeptide: Histidine ammonia-lyase (513 aa).

The segment at residues 142-144 (ASG) is a cross-link (5-imidazolinone (Ala-Gly)). Ser143 bears the 2,3-didehydroalanine (Ser) mark.

Belongs to the PAL/histidase family. Post-translationally, contains an active site 4-methylidene-imidazol-5-one (MIO), which is formed autocatalytically by cyclization and dehydration of residues Ala-Ser-Gly.

It localises to the cytoplasm. It catalyses the reaction L-histidine = trans-urocanate + NH4(+). It functions in the pathway amino-acid degradation; L-histidine degradation into L-glutamate; N-formimidoyl-L-glutamate from L-histidine: step 1/3. The polypeptide is Histidine ammonia-lyase (Methylobacterium sp. (strain 4-46)).